The chain runs to 194 residues: Elongation factor P (194 aa).

This sequence belongs to the elongation factor P family.

It is found in the cytoplasm. It functions in the pathway protein biosynthesis; polypeptide chain elongation. Functionally, involved in peptide bond synthesis. Stimulates efficient translation and peptide-bond synthesis on native or reconstituted 70S ribosomes in vitro. Probably functions indirectly by altering the affinity of the ribosome for aminoacyl-tRNA, thus increasing their reactivity as acceptors for peptidyl transferase. This chain is Elongation factor P, found in Hydrogenobaculum sp. (strain Y04AAS1).